A 594-amino-acid chain; its full sequence is Glutamate decarboxylase 1 (594 aa).

Positions 1 to 13 (MASSTPSSSATSS) are enriched in low complexity. The interval 1–22 (MASSTPSSSATSSNAGADPNTA) is disordered. Serine 78 carries the phosphoserine modification. 190 to 192 (QLS) is a 4-aminobutanoate binding site. Lysine 405 is subject to N6-(pyridoxal phosphate)lysine. Residue arginine 567 coordinates 4-aminobutanoate.

The protein belongs to the group II decarboxylase family. In terms of assembly, homodimer. Pyridoxal 5'-phosphate is required as a cofactor.

It carries out the reaction L-glutamate + H(+) = 4-aminobutanoate + CO2. Its function is as follows. Catalyzes the synthesis of the inhibitory neurotransmitter gamma-aminobutyric acid (GABA) with pyridoxal 5'-phosphate as cofactor. In Canis lupus familiaris (Dog), this protein is Glutamate decarboxylase 1 (GAD1).